Reading from the N-terminus, the 378-residue chain is Erythronate-4-phosphate dehydrogenase (378 aa).

2 residues coordinate substrate: Ser45 and Thr66. Asp146 provides a ligand contact to NAD(+). The active site involves Arg207. Residue Asp231 coordinates NAD(+). Residue Glu236 is part of the active site. Catalysis depends on His253, which acts as the Proton donor. Residue Gly256 participates in NAD(+) binding.

The protein belongs to the D-isomer specific 2-hydroxyacid dehydrogenase family. PdxB subfamily. Homodimer.

The protein localises to the cytoplasm. It carries out the reaction 4-phospho-D-erythronate + NAD(+) = (R)-3-hydroxy-2-oxo-4-phosphooxybutanoate + NADH + H(+). It participates in cofactor biosynthesis; pyridoxine 5'-phosphate biosynthesis; pyridoxine 5'-phosphate from D-erythrose 4-phosphate: step 2/5. In terms of biological role, catalyzes the oxidation of erythronate-4-phosphate to 3-hydroxy-2-oxo-4-phosphonooxybutanoate. In Wigglesworthia glossinidia brevipalpis, this protein is Erythronate-4-phosphate dehydrogenase.